The following is a 705-amino-acid chain: Ribosomal RNA large subunit methyltransferase K/L (705 aa).

The 112-residue stretch at 43–154 folds into the THUMP domain; that stretch reads LMYQSLMWSR…KDTASIALDL (112 aa).

This sequence belongs to the methyltransferase superfamily. RlmKL family.

It localises to the cytoplasm. It carries out the reaction guanosine(2445) in 23S rRNA + S-adenosyl-L-methionine = N(2)-methylguanosine(2445) in 23S rRNA + S-adenosyl-L-homocysteine + H(+). The enzyme catalyses guanosine(2069) in 23S rRNA + S-adenosyl-L-methionine = N(2)-methylguanosine(2069) in 23S rRNA + S-adenosyl-L-homocysteine + H(+). Its function is as follows. Specifically methylates the guanine in position 2445 (m2G2445) and the guanine in position 2069 (m7G2069) of 23S rRNA. The sequence is that of Ribosomal RNA large subunit methyltransferase K/L from Erwinia tasmaniensis (strain DSM 17950 / CFBP 7177 / CIP 109463 / NCPPB 4357 / Et1/99).